The primary structure comprises 298 residues: MSDANLDSSKKNFLEGEVDDEESVILTLVPVKDDANMEQMEPSVSSTSDVKLEKPKKYNPGHLLQTNEQFTAPQKARCKIPALPLPTILPPINKVCRDTLRDWCQQLGLSTNGKKIEVYLRLHRHAYPEQRQDMPEMSQETRLQRCSRKRKAVTKRARLQRSYEMNERAEETNTVEVITSAPGAMLASWARIAARAVQPKALNSCSIPVSVEAFLMQASGVRWCVVHGRLLSADTKGWVRLQFHAGQAWVPTTHRRMISLFLLPACIFPSPGIEDNMLCPDCAKRNKKMMKRLMTVEK.

The disordered stretch occupies residues 36–61; sequence NMEQMEPSVSSTSDVKLEKPKKYNPG. Residues 92-126 form the SAP domain; sequence INKVCRDTLRDWCQQLGLSTNGKKIEVYLRLHRHA.

As to quaternary structure, interacts with DPPA4. Expressed in embryonic stem cells. No expression is seen in 5 months embryo, mesenchymal stem cells, embryonic fibrocytes and adult tissues.

It localises to the nucleus. Binds to target gene promoters, including NKX2-5 and SYCE1, but not GATA4, and may be involved in the maintenance of the active epigenetic status of these genes. The protein is Developmental pluripotency-associated protein 2 (DPPA2) of Homo sapiens (Human).